A 503-amino-acid chain; its full sequence is Discoidin, CUB and LCCL domain-containing protein 1 (503 aa).

The signal sequence occupies residues 1-25 (MGTGAGGPSVLALLFAVCAPLRLQA). Over 26-250 (EELGDGCGHI…FTTPGMNITT (225 aa)) the chain is Extracellular. Intrachain disulfides connect C32-C59, C85-C103, C149-C165, and C169-C191. The CUB domain occupies 32–141 (CGHIVTSQDS…RGFLLTYASS (110 aa)). Residue N55 is glycosylated (N-linked (GlcNAc...) asparagine). The 97-residue stretch at 143–239 (HPDLITCLER…RHGSLSEKRF (97 aa)) folds into the LCCL domain. The N-linked (GlcNAc...) asparagine glycan is linked to N247. A helical membrane pass occupies residues 251-271 (VAIPSVIFIALLLTGMGIFAI). Residues 272-503 (CRKRKKKGNP…LNQTAMTALL (232 aa)) are Cytoplasmic-facing. S305 bears the Phosphoserine mark. Residue T406 is modified to Phosphothreonine. The disordered stretch occupies residues 410 to 503 (QSGYRVPGPR…LNQTAMTALL (94 aa)). Positions 494–503 (LNQTAMTALL) are enriched in polar residues.

It is found in the membrane. The chain is Discoidin, CUB and LCCL domain-containing protein 1 (Dcbld1) from Mus musculus (Mouse).